Reading from the N-terminus, the 337-residue chain is Glyceraldehyde-3-phosphate dehydrogenase 2 (337 aa).

NADP(+)-binding positions include 11–12 (RI), D35, R80, and T122. D-glyceraldehyde 3-phosphate is bound by residues 153–155 (SCT), T184, R199, 212–213 (TG), and R235. C154 serves as the catalytic Nucleophile. N317 is a binding site for NADP(+).

The protein belongs to the glyceraldehyde-3-phosphate dehydrogenase family. Homotetramer.

The protein localises to the cytoplasm. It catalyses the reaction D-glyceraldehyde 3-phosphate + phosphate + NADP(+) = (2R)-3-phospho-glyceroyl phosphate + NADPH + H(+). The enzyme catalyses D-glyceraldehyde 3-phosphate + phosphate + NAD(+) = (2R)-3-phospho-glyceroyl phosphate + NADH + H(+). Its pathway is carbohydrate biosynthesis; Calvin cycle. In terms of biological role, gap2 has a major role in carbon fixation as a component of the Calvin cycle. Catalyzes the oxidative phosphorylation of glyceraldehyde 3-phosphate (G3P) to 1,3-bisphosphoglycerate (BPG) using the cofactor NAD. The first reaction step involves the formation of a hemiacetal intermediate between G3P and a cysteine residue, and this hemiacetal intermediate is then oxidized to a thioester, with concomitant reduction of NAD to NADH. The reduced NADH is then exchanged with the second NAD, and the thioester is attacked by a nucleophilic inorganic phosphate to produce BPG. This chain is Glyceraldehyde-3-phosphate dehydrogenase 2 (gap2), found in Trichormus variabilis (strain ATCC 29413 / PCC 7937) (Anabaena variabilis).